The chain runs to 448 residues: Probable glycine dehydrogenase (decarboxylating) subunit 1 (448 aa).

It belongs to the GcvP family. N-terminal subunit subfamily. As to quaternary structure, the glycine cleavage system is composed of four proteins: P, T, L and H. In this organism, the P 'protein' is a heterodimer of two subunits.

It carries out the reaction N(6)-[(R)-lipoyl]-L-lysyl-[glycine-cleavage complex H protein] + glycine + H(+) = N(6)-[(R)-S(8)-aminomethyldihydrolipoyl]-L-lysyl-[glycine-cleavage complex H protein] + CO2. The glycine cleavage system catalyzes the degradation of glycine. The P protein binds the alpha-amino group of glycine through its pyridoxal phosphate cofactor; CO(2) is released and the remaining methylamine moiety is then transferred to the lipoamide cofactor of the H protein. This is Probable glycine dehydrogenase (decarboxylating) subunit 1 from Rhodospirillum rubrum (strain ATCC 11170 / ATH 1.1.1 / DSM 467 / LMG 4362 / NCIMB 8255 / S1).